A 533-amino-acid chain; its full sequence is Probable DNA ligase (533 aa).

Glu-211 serves as a coordination point for ATP. The active-site N6-AMP-lysine intermediate is Lys-213. Arg-218, Arg-233, Glu-262, Phe-302, Arg-374, and Lys-380 together coordinate ATP. Residues 512-533 (LAGEAAEKGQAEGGGEELEDDG) form a disordered region.

The protein belongs to the ATP-dependent DNA ligase family. Mg(2+) is required as a cofactor.

It catalyses the reaction ATP + (deoxyribonucleotide)n-3'-hydroxyl + 5'-phospho-(deoxyribonucleotide)m = (deoxyribonucleotide)n+m + AMP + diphosphate.. Functionally, DNA ligase that seals nicks in double-stranded DNA during DNA replication, DNA recombination and DNA repair. In Sorangium cellulosum (strain So ce56) (Polyangium cellulosum (strain So ce56)), this protein is Probable DNA ligase.